Consider the following 556-residue polypeptide: HIRA-interacting protein 3 (556 aa).

Ser27 is subject to Phosphoserine. Residues 64–77 (DEAASREDKLDLTK) show a composition bias toward basic and acidic residues. Positions 64–426 (DEAASREDKL…GRRGEDHPAV (363 aa)) are disordered. Residue Thr84 is modified to Phosphothreonine. A phosphoserine mark is found at Ser87, Ser98, Ser100, Ser125, Ser142, Ser143, Ser159, and Ser160. Over residues 99–108 (ESESGSEASS) the composition is skewed to low complexity. Basic and acidic residues predominate over residues 126–158 (PAKEENPRRASKAVEESSDEERQRDLPAQRGEE). Over residues 168–177 (KGKTRKKPVV) the composition is skewed to basic residues. Phosphoserine occurs at positions 196, 199, 223, and 227. Basic and acidic residues predominate over residues 209–224 (KKVEGNKGTKSLKESE). Residues 240–254 (EEEVEEEEKEEDEEK) are compositionally biased toward acidic residues. A compositionally biased stretch (basic residues) spans 260–269 (RTRSNGRRKS). Phosphoserine occurs at positions 289 and 291. Residues 304-322 (DSGRDREPPVQRKSEDRTQ) show a composition bias toward basic and acidic residues. A phosphoserine mark is found at Ser330, Ser332, Ser333, and Ser357. Thr358 bears the Phosphothreonine mark. A phosphoserine mark is found at Ser359, Ser363, Ser370, and Ser372. Residues 385–396 (RSSKKSSRKGRT) show a composition bias toward basic residues. Positions 403 to 527 (SDGSPEAKGG…APPGELYRRT (125 aa)) are interaction with the histone H2A-H2B complex. Thr471 bears the Phosphothreonine mark. The tract at residues 502 to 556 (SGRPRRRTAWNPLGEAAPPGELYRRTLDSDEERPRPAPPDWSHMRGIISSDGESN) is disordered. Over residues 523–536 (LYRRTLDSDEERPR) the composition is skewed to basic and acidic residues. Phosphoserine is present on residues Ser530, Ser550, Ser551, and Ser555.

As to quaternary structure, interacts (via C-terminus) with histone H2A-H2B dimers; the interaction is direct. Interacts with HIRA. Interacts with CK2. Phosphorylated by CK2. Widely expressed. Isoform 1 is predominant in skeletal muscle. Isoform 2 is predominant in liver and heart.

Its subcellular location is the nucleus. Its function is as follows. Histone chaperone that carries a H2A-H2B histone complex and facilitates its deposition onto chromatin. This chain is HIRA-interacting protein 3 (HIRIP3), found in Homo sapiens (Human).